A 716-amino-acid chain; its full sequence is Putative proline--tRNA ligase C19C7.06 (716 aa).

The interval 655-675 (KNSARQVNGDEPEDEKAPSMG) is disordered.

This sequence belongs to the class-II aminoacyl-tRNA synthetase family.

It localises to the cytoplasm. It carries out the reaction tRNA(Pro) + L-proline + ATP = L-prolyl-tRNA(Pro) + AMP + diphosphate. This chain is Putative proline--tRNA ligase C19C7.06 (prs1), found in Schizosaccharomyces pombe (strain 972 / ATCC 24843) (Fission yeast).